Reading from the N-terminus, the 332-residue chain is MLFLQFLFVDVVLGGSITENVVQENISLYLMQISSYANQSWTQNLGSAWLDQLQTHSWDSESGTIIFLHAWSRGNFSNEEVTDMQLLLRVHFAELTLDVHQQASQLQFKYPFDIQVRLGCELHSRETTKSFLHVAFNGLNFLSFQHKSCVPSPEGETRAQKACDILNTYEATKEIAYYVMNDICPRLLLSLLEAGKMDLQRQVRPEVWLSSSPNLEPGRLLLACHVSGFYPKPIWVMWMRGAQEQLETKQGDILPHADGTWYLRVTLNVVAEEAAGLSCRVRHSSLRDQDIILYWGHGLSVILIALAVIVPLVLLIVLVLLCKKRCTYQGIP.

The first 17 residues, 1–17, serve as a signal peptide directing secretion; the sequence is MLFLQFLFVDVVLGGSI. The Extracellular portion of the chain corresponds to 18 to 300; it reads TENVVQENIS…IILYWGHGLS (283 aa). N-linked (GlcNAc...) asparagine glycans are attached at residues N25, N38, and N75. 2 disulfide bridges follow: C120-C184 and C224-C279. An Ig-like domain is found at 205–292; it reads PEVWLSSSPN…HSSLRDQDII (88 aa). The helical transmembrane segment at 301–321 threads the bilayer; that stretch reads VILIALAVIVPLVLLIVLVLL. Residues 322 to 332 lie on the Cytoplasmic side of the membrane; the sequence is CKKRCTYQGIP.

In terms of assembly, heterodimer with B2M (beta-2-microglobulin).

The protein resides in the cell membrane. Its subcellular location is the endosome membrane. Antigen-presenting protein that binds self and non-self lipid and glycolipid antigens and presents them to T-cell receptors on natural killer T-cells. The protein is T-cell surface glycoprotein CD1c2 (CD1C2) of Cavia porcellus (Guinea pig).